A 493-amino-acid polypeptide reads, in one-letter code: Probable cytosol aminopeptidase (493 aa).

2 residues coordinate Mn(2+): K257 and D262. The active site involves K269. The Mn(2+) site is built by D280, D339, and E341. Residue R343 is part of the active site.

It belongs to the peptidase M17 family. The cofactor is Mn(2+).

Its subcellular location is the cytoplasm. It catalyses the reaction Release of an N-terminal amino acid, Xaa-|-Yaa-, in which Xaa is preferably Leu, but may be other amino acids including Pro although not Arg or Lys, and Yaa may be Pro. Amino acid amides and methyl esters are also readily hydrolyzed, but rates on arylamides are exceedingly low.. It carries out the reaction Release of an N-terminal amino acid, preferentially leucine, but not glutamic or aspartic acids.. Presumably involved in the processing and regular turnover of intracellular proteins. Catalyzes the removal of unsubstituted N-terminal amino acids from various peptides. The sequence is that of Probable cytosol aminopeptidase (pepA) from Aquifex aeolicus (strain VF5).